The following is a 157-amino-acid chain: Protein AE7 (157 aa).

It belongs to the MIP18 family. In terms of assembly, part of a complex formed of AE7, CIA1, MMS19 and NAR1. Interacts with CIA1 and MMS19, but not with NAR1. Expressed in the embryo, shoot apical meristem, leaf primordia, inflorescence and all floral organs.

It is found in the nucleus. The protein localises to the cytoplasm. Central member of the cytosolic iron-sulfur (Fe-S) protein assembly (CIA) pathway. Involved in leaf polarity formation. Promotes leaf adaxial identity. May play a role in the cell cycle progression and is required for cell proliferation. This Arabidopsis thaliana (Mouse-ear cress) protein is Protein AE7.